Here is a 238-residue protein sequence, read N- to C-terminus: MTDTAENQTQNNWQAGHPRSIRSFVLRQSHMTAAQQRAIDTLWDSFGIDYQATPADLDARFGSSRPKILEIGFGMGTATAEIARRLPETDFLAIDVHGPGVGNLLKLIDENHLENIRVMRHDAVEVVENMLQDGSLDGIHIFFPDPWHKKRHHKRRLIQAPFIAKLLPKLKTGGYIHLATDWEEYAQQMLEVLSSFDSLQNTAADYAPTPDYRPETKFEARGKRLGHGVWDLVFKRIG.

The S-adenosyl-L-methionine site is built by glutamate 70, aspartate 95, aspartate 122, and aspartate 145. Aspartate 145 is an active-site residue. Residues lysine 149, aspartate 181, and 216 to 219 (TKFE) each bind substrate.

This sequence belongs to the class I-like SAM-binding methyltransferase superfamily. TrmB family.

It carries out the reaction guanosine(46) in tRNA + S-adenosyl-L-methionine = N(7)-methylguanosine(46) in tRNA + S-adenosyl-L-homocysteine. It functions in the pathway tRNA modification; N(7)-methylguanine-tRNA biosynthesis. Functionally, catalyzes the formation of N(7)-methylguanine at position 46 (m7G46) in tRNA. The protein is tRNA (guanine-N(7)-)-methyltransferase of Neisseria meningitidis serogroup B (strain ATCC BAA-335 / MC58).